The primary structure comprises 343 residues: Protein SOSEKI 4 (343 aa).

The segment at R18 to D109 is DIX-like oligomerization domain. Residues R148–T194 form a disordered region. Positions S184 to T194 are enriched in polar residues. An Association to cell membranes motif is present at residues C233 to G234.

This sequence belongs to the SOSEKI family. In terms of assembly, homodimer. Forms long polymer filaments with other SOKs proteins polymers (e.g. SOK1, SOK2, SOK3 and SOK4) crucial for polar localization and biological activity. Binds to ANGUSTIFOLIA (AN). As to expression, expressed during embryogenesis and in roots.

Its subcellular location is the cell membrane. SOSEKI proteins (SOK1-5) locally interpret global polarity cues and can influence cell division orientation to coordinate cell polarization relative to body axes, probably by guiding ANGUSTIFOLIA (AN) polarized localization. Positive regulator of auxin (indole-3-acetic acid, IAA) biosynthesis and signaling pathway leading to the modulation of seedling growth, plant and inflorescence development. Negative regulator of stress responses (e.g. salinity and osmotic stress). This is Protein SOSEKI 4 from Arabidopsis thaliana (Mouse-ear cress).